Here is a 328-residue protein sequence, read N- to C-terminus: Putative thiosulfate sulfurtransferase mpst-1 (328 aa).

2 consecutive Rhodanese domains span residues 22–162 (NKEG…EVST) and 202–320 (KTSE…KKIS). Catalysis depends on Cys278, which acts as the Cysteine persulfide intermediate.

It catalyses the reaction thiosulfate + hydrogen cyanide = thiocyanate + sulfite + 2 H(+). The sequence is that of Putative thiosulfate sulfurtransferase mpst-1 (mpst-1) from Caenorhabditis elegans.